The chain runs to 178 residues: Large ribosomal subunit protein uL6 (178 aa).

This sequence belongs to the universal ribosomal protein uL6 family. As to quaternary structure, part of the 50S ribosomal subunit.

Its function is as follows. This protein binds to the 23S rRNA, and is important in its secondary structure. It is located near the subunit interface in the base of the L7/L12 stalk, and near the tRNA binding site of the peptidyltransferase center. In Streptococcus pneumoniae serotype 19F (strain G54), this protein is Large ribosomal subunit protein uL6.